The sequence spans 241 residues: Large ribosomal subunit protein uL3 (241 aa).

Disordered stretches follow at residues 139 to 166 (VSHRSIGSTGGRQDPGKTFKNKKMPGHM) and 209 to 241 (KKPLPKDAPKPGKFKVAGDDKVTADAPTEKEGA). The residue at position 151 (glutamine 151) is an N5-methylglutamine.

It belongs to the universal ribosomal protein uL3 family. Part of the 50S ribosomal subunit. Forms a cluster with proteins L14 and L19. Post-translationally, methylated by PrmB.

One of the primary rRNA binding proteins, it binds directly near the 3'-end of the 23S rRNA, where it nucleates assembly of the 50S subunit. This chain is Large ribosomal subunit protein uL3, found in Nitrobacter hamburgensis (strain DSM 10229 / NCIMB 13809 / X14).